A 114-amino-acid polypeptide reads, in one-letter code: Nucleoid-associated protein PCC7424_2224 (114 aa).

It belongs to the YbaB/EbfC family. Homodimer.

The protein resides in the cytoplasm. Its subcellular location is the nucleoid. In terms of biological role, binds to DNA and alters its conformation. May be involved in regulation of gene expression, nucleoid organization and DNA protection. In Gloeothece citriformis (strain PCC 7424) (Cyanothece sp. (strain PCC 7424)), this protein is Nucleoid-associated protein PCC7424_2224.